The following is an 857-amino-acid chain: Facilitated trehalose transporter Tret1-1 (857 aa).

Disordered regions lie at residues 1-28 and 62-203; these read MSGRDSRGAGGGGGGHQPLSNAMGKLKE and DPFL…KATS. Topologically, residues 1-392 are cytoplasmic; the sequence is MSGRDSRGAG…VYRPTTNPIY (392 aa). Positions 69 to 81 are enriched in polar residues; sequence VSPQRHPQNTVRT. Basic and acidic residues predominate over residues 134–143; that stretch reads EIREHRDRQQ. Positions 171–181 are enriched in polar residues; sequence GNSNTNSNKAA. A phosphoserine mark is found at serine 248, serine 249, serine 250, serine 320, and serine 322. The segment at 327 to 346 is disordered; the sequence is LTSRQHFQQQRSISTDSRKS. A compositionally biased stretch (polar residues) spans 330-341; the sequence is RQHFQQQRSIST. A helical transmembrane segment spans residues 393 to 413; that stretch reads IWTQVLAALSVSLGSLVVGFV. Over 414–440 the chain is Extracellular; the sequence is SAYTSPALVSMTDRNITSFEVTQDAGS. Asparagine 428 carries N-linked (GlcNAc...) asparagine glycosylation. The helical transmembrane segment at 441–461 threads the bilayer; it reads WVGGIMPLAGLAGGIAGGPLI. Residues 462-473 lie on the Cytoplasmic side of the membrane; sequence EYLGRRNTILAT. A helical transmembrane segment spans residues 474–494; it reads AVPFIVSSLLIACAVNVAMVL. The Extracellular segment spans residues 495–497; it reads CGR. The helical transmembrane segment at 498–518 threads the bilayer; that stretch reads FLAGFCVGIASLSLPVYLGET. The Cytoplasmic portion of the chain corresponds to 519–528; it reads VQPEVRGTLG. Residues 529–549 traverse the membrane as a helical segment; that stretch reads LLPTAFGNIGILLCFVAGSFM. Asparagine 550 is a glycosylation site (N-linked (GlcNAc...) asparagine). Topologically, residues 550–552 are extracellular; it reads NWS. A helical membrane pass occupies residues 553-573; sequence MLAFLGAALPVPFLILMFLIP. The Cytoplasmic segment spans residues 574–636; sequence ETPRWFVGRG…ELFKRINLKP (63 aa). A helical membrane pass occupies residues 637-657; it reads LSISLGLMFFQQFSGINAVIF. The Extracellular portion of the chain corresponds to 658-673; sequence YTVQIFKDAGSTIDSN. The helical transmembrane segment at 674-694 threads the bilayer; sequence LCTIIVGIVNFFATFMGILLI. Residues 695-700 lie on the Cytoplasmic side of the membrane; it reads DRLGRK. A helical membrane pass occupies residues 701 to 721; it reads ILLYISDIAMILTLSILGGFF. The Extracellular portion of the chain corresponds to 722–740; sequence YCKAHGPDVSHLGWLPLTC. The chain crosses the membrane as a helical span at residues 741–761; sequence FVIYILGFSLGFGPIPWLMMG. Topologically, residues 762–770 are cytoplasmic; that stretch reads EILPAKIRG. The helical transmembrane segment at 771 to 791 threads the bilayer; the sequence is PAASVVTAFNWFCTFVVTKTF. Over 792-801 the chain is Extracellular; that stretch reads QDLTGAMGAH. The chain crosses the membrane as a helical span at residues 802–822; it reads GAFWLFGAICFVGLFFVIIYV. Residues 823–857 lie on the Cytoplasmic side of the membrane; the sequence is PETQGKTLEDIERKMMGRVRRMSSVANIKPLSFNM. Phosphoserine is present on residues serine 845 and serine 846.

This sequence belongs to the major facilitator superfamily. Sugar transporter (TC 2.A.1.1) family. Trehalose transporter subfamily.

It is found in the cell membrane. Functionally, low-capacity facilitative transporter for trehalose. Does not transport maltose, sucrose or lactose. Mediates the bidirectional transfer of trehalose. Responsible for the transport of trehalose synthesized in the fat body and the incorporation of trehalose into other tissues that require a carbon source, thereby regulating trehalose levels in the hemolymph. This is Facilitated trehalose transporter Tret1-1 from Drosophila simulans (Fruit fly).